Consider the following 451-residue polypeptide: Chromosomal replication initiator protein DnaA (451 aa).

The tract at residues 1 to 71 is domain I, interacts with DnaA modulators; sequence MSEKEIWDKV…QAIIYDVIGY (71 aa). Residues 71 to 112 form a domain II region; sequence YEVKPHFISEDELASYNNVNTQEVQEPQVQHSSIDDKTWGKE. The interval 113–329 is domain III, AAA+ region; that stretch reads QFNMHNTFDT…GALTRLLAYS (217 aa). Positions 157, 159, 160, and 161 each coordinate ATP. Positions 330 to 451 are domain IV, binds dsDNA; sequence KLQGKPITTE…ENLEKEIRNQ (122 aa).

The protein belongs to the DnaA family. As to quaternary structure, oligomerizes as a right-handed, spiral filament on DNA at oriC.

It is found in the cytoplasm. Functionally, plays an essential role in the initiation and regulation of chromosomal replication. ATP-DnaA binds to the origin of replication (oriC) to initiate formation of the DNA replication initiation complex once per cell cycle. Binds the DnaA box (a 9 base pair repeat at the origin) and separates the double-stranded (ds)DNA. Forms a right-handed helical filament on oriC DNA; dsDNA binds to the exterior of the filament while single-stranded (ss)DNA is stabiized in the filament's interior. The ATP-DnaA-oriC complex binds and stabilizes one strand of the AT-rich DNA unwinding element (DUE), permitting loading of DNA polymerase. After initiation quickly degrades to an ADP-DnaA complex that is not apt for DNA replication. Binds acidic phospholipids. The protein is Chromosomal replication initiator protein DnaA of Staphylococcus epidermidis (strain ATCC 12228 / FDA PCI 1200).